The chain runs to 295 residues: Ribosomal RNA small subunit methyltransferase A (295 aa).

6 residues coordinate S-adenosyl-L-methionine: Asn31, Leu33, Gly58, Glu79, Asp104, and Asn129.

Belongs to the class I-like SAM-binding methyltransferase superfamily. rRNA adenine N(6)-methyltransferase family. RsmA subfamily.

The protein resides in the cytoplasm. The catalysed reaction is adenosine(1518)/adenosine(1519) in 16S rRNA + 4 S-adenosyl-L-methionine = N(6)-dimethyladenosine(1518)/N(6)-dimethyladenosine(1519) in 16S rRNA + 4 S-adenosyl-L-homocysteine + 4 H(+). In terms of biological role, specifically dimethylates two adjacent adenosines (A1518 and A1519) in the loop of a conserved hairpin near the 3'-end of 16S rRNA in the 30S particle. May play a critical role in biogenesis of 30S subunits. This chain is Ribosomal RNA small subunit methyltransferase A, found in Leuconostoc mesenteroides subsp. mesenteroides (strain ATCC 8293 / DSM 20343 / BCRC 11652 / CCM 1803 / JCM 6124 / NCDO 523 / NBRC 100496 / NCIMB 8023 / NCTC 12954 / NRRL B-1118 / 37Y).